A 455-amino-acid polypeptide reads, in one-letter code: Protein png1 (455 aa).

The interval 1–110 (MTDGRQQHTR…LPVFPSPPRD (110 aa)) is disordered. Low complexity predominate over residues 38–53 (SLQEQSRSRSRTQSPS). Pro residues predominate over residues 59-73 (HTPPHPSRAPPPPPT). Residues 74–98 (GAHYPSSQSPSQQHQQHQLPASSSL) show a composition bias toward low complexity. Residues cysteine 199, cysteine 202, cysteine 231, and cysteine 236 each contribute to the Zn(2+) site. The interval 408–455 (NLIPREQTSGRPGEQKTPASMQDTPVDWVAAQQMGPGQSGPDRSQDGR) is disordered.

Belongs to the transglutaminase-like superfamily. PNGase family.

In Aspergillus fumigatus (strain ATCC MYA-4609 / CBS 101355 / FGSC A1100 / Af293) (Neosartorya fumigata), this protein is Protein png1 (png1).